A 321-amino-acid polypeptide reads, in one-letter code: Glucokinase (321 aa).

ATP is bound at residue 8–13 (GDVGGT).

Belongs to the bacterial glucokinase family.

It is found in the cytoplasm. It catalyses the reaction D-glucose + ATP = D-glucose 6-phosphate + ADP + H(+). This chain is Glucokinase, found in Salmonella schwarzengrund (strain CVM19633).